The sequence spans 136 residues: Large ribosomal subunit protein eL27 (136 aa).

In terms of domain architecture, KOW spans 5–36 (MKPGKVVLVLRGKYAGRKAVVVKQQDEGVSDR).

This sequence belongs to the eukaryotic ribosomal protein eL27 family. Component of the large ribosomal subunit.

Its subcellular location is the cytoplasm. It localises to the cytosol. The protein localises to the rough endoplasmic reticulum. Its function is as follows. Component of the large ribosomal subunit. This is Large ribosomal subunit protein eL27 (rpl-27) from Caenorhabditis elegans.